A 329-amino-acid chain; its full sequence is 4-hydroxythreonine-4-phosphate dehydrogenase (329 aa).

2 residues coordinate substrate: histidine 136 and threonine 137. Residues histidine 166, histidine 211, and histidine 266 each contribute to the a divalent metal cation site. Positions 274, 283, and 292 each coordinate substrate.

Belongs to the PdxA family. In terms of assembly, homodimer. Zn(2+) serves as cofactor. Mg(2+) is required as a cofactor. It depends on Co(2+) as a cofactor.

The protein localises to the cytoplasm. The enzyme catalyses 4-(phosphooxy)-L-threonine + NAD(+) = 3-amino-2-oxopropyl phosphate + CO2 + NADH. Its pathway is cofactor biosynthesis; pyridoxine 5'-phosphate biosynthesis; pyridoxine 5'-phosphate from D-erythrose 4-phosphate: step 4/5. Catalyzes the NAD(P)-dependent oxidation of 4-(phosphooxy)-L-threonine (HTP) into 2-amino-3-oxo-4-(phosphooxy)butyric acid which spontaneously decarboxylates to form 3-amino-2-oxopropyl phosphate (AHAP). This chain is 4-hydroxythreonine-4-phosphate dehydrogenase, found in Shigella flexneri serotype 5b (strain 8401).